The following is a 483-amino-acid chain: Serine/threonine-protein kinase BSK4 (483 aa).

Residue glycine 2 is the site of N-myristoyl glycine attachment. A Protein kinase domain is found at 56 to 322 (ENVVSEHGET…DTEVLSHVLM (267 aa)). Residues 62-70 (HGETAPNVV) and lysine 84 each bind ATP. Aspartate 178 functions as the Proton acceptor in the catalytic mechanism.

The protein belongs to the protein kinase superfamily. Ser/Thr protein kinase family.

It is found in the cell membrane. It carries out the reaction L-seryl-[protein] + ATP = O-phospho-L-seryl-[protein] + ADP + H(+). It catalyses the reaction L-threonyl-[protein] + ATP = O-phospho-L-threonyl-[protein] + ADP + H(+). Probable serine/threonine kinase that acts as a positive regulator of brassinosteroid (BR) signaling downstream of the receptor kinase BRI1. Functions redundantly with BSK3, BSK6, BSK7 and BSK8. The protein is Serine/threonine-protein kinase BSK4 of Arabidopsis thaliana (Mouse-ear cress).